The primary structure comprises 483 residues: UDP-N-acetylmuramyl-tripeptide synthetase (483 aa).

Ser43 provides a ligand contact to UDP-N-acetyl-alpha-D-muramoyl-L-alanyl-D-glutamate. 116–122 lines the ATP pocket; the sequence is GTKGKTT. UDP-N-acetyl-alpha-D-muramoyl-L-alanyl-D-glutamate is bound by residues 160–161, Ser187, and Arg195; that span reads TT. Lys229 carries the post-translational modification N6-carboxylysine.

Belongs to the MurCDEF family. MurE subfamily. In terms of processing, carboxylation is probably crucial for Mg(2+) binding and, consequently, for the gamma-phosphate positioning of ATP.

The protein localises to the cytoplasm. The protein operates within cell wall biogenesis; peptidoglycan biosynthesis. Functionally, catalyzes the addition of an amino acid to the nucleotide precursor UDP-N-acetylmuramoyl-L-alanyl-D-glutamate (UMAG) in the biosynthesis of bacterial cell-wall peptidoglycan. This is UDP-N-acetylmuramyl-tripeptide synthetase from Lactococcus lactis subsp. cremoris (strain SK11).